A 212-amino-acid chain; its full sequence is Ribonuclease HII (212 aa).

Residues 28 to 212 enclose the RNase H type-2 domain; the sequence is SLIAGIDEVG…KSFAPVRQVF (185 aa). A divalent metal cation is bound by residues D34, E35, and D127.

The protein belongs to the RNase HII family. Mn(2+) serves as cofactor. It depends on Mg(2+) as a cofactor.

It localises to the cytoplasm. The catalysed reaction is Endonucleolytic cleavage to 5'-phosphomonoester.. Its function is as follows. Endonuclease that specifically degrades the RNA of RNA-DNA hybrids. This chain is Ribonuclease HII, found in Chlamydia abortus (strain DSM 27085 / S26/3) (Chlamydophila abortus).